We begin with the raw amino-acid sequence, 238 residues long: Oil body-associated protein 1A (238 aa).

It belongs to the OBAP family. As to expression, expressed in seeds, but not in leaves or roots. Highest expression in scutellum. Detected in embryo axis and endosperm.

It is found in the lipid droplet. The protein is Oil body-associated protein 1A of Zea mays (Maize).